We begin with the raw amino-acid sequence, 195 residues long: Interferon tau-5 (195 aa).

Positions Met-1–Gly-23 are cleaved as a signal peptide. Cystine bridges form between Cys-24–Cys-122 and Cys-52–Cys-162.

The protein belongs to the alpha/beta interferon family. IFN-alphaII subfamily. Constitutively and exclusively expressed in the mononuclear cells of the extraembryonic trophectoderm.

The protein resides in the secreted. Functionally, paracrine hormone primarily responsible for maternal recognition of pregnancy. Interacts with endometrial receptors, probably type I interferon receptors, and blocks estrogen receptor expression, preventing the estrogen-induced increase in oxytocin receptor expression in the endometrium. This results in the suppression of the pulsatile endometrial release of the luteolytic hormone prostaglandin F2-alpha, hindering the regression of the corpus luteum (luteolysis) and therefore a return to ovarian cyclicity. This, and a possible direct effect of IFN-tau on prostaglandin synthesis, leads in turn to continued ovarian progesterone secretion, which stimulates the secretion by the endometrium of the nutrients required for the growth of the conceptus. In summary, displays particularly high antiviral and antiproliferative potency concurrently with particular weak cytotoxicity, high antiluteolytic activity and immunomodulatory properties. In contrast with other IFNs, IFN-tau is not virally inducible. The sequence is that of Interferon tau-5 (IFNT5) from Ovis aries (Sheep).